A 138-amino-acid chain; its full sequence is Putative pre-16S rRNA nuclease (138 aa).

This sequence belongs to the YqgF nuclease family.

It is found in the cytoplasm. In terms of biological role, could be a nuclease involved in processing of the 5'-end of pre-16S rRNA. The sequence is that of Putative pre-16S rRNA nuclease from Escherichia coli O7:K1 (strain IAI39 / ExPEC).